A 688-amino-acid chain; its full sequence is Glycine--tRNA ligase beta subunit (688 aa).

It belongs to the class-II aminoacyl-tRNA synthetase family. In terms of assembly, tetramer of two alpha and two beta subunits.

The protein resides in the cytoplasm. The enzyme catalyses tRNA(Gly) + glycine + ATP = glycyl-tRNA(Gly) + AMP + diphosphate. The protein is Glycine--tRNA ligase beta subunit of Geotalea uraniireducens (strain Rf4) (Geobacter uraniireducens).